We begin with the raw amino-acid sequence, 426 residues long: Torsin-4A (426 aa).

Positions 41–60 (QPGTEPDSGTGTLGPTGSLG) are disordered. A compositionally biased stretch (low complexity) spans 48-60 (SGTGTLGPTGSLG). Residues Ser-58 and Ser-76 each carry the phosphoserine modification. At Thr-84 the chain carries Phosphothreonine. Ser-101 carries the post-translational modification Phosphoserine. The chain crosses the membrane as a helical span at residues 117–133 (CLLLLVAIVGFQVLNAI). 189 to 196 (GPSGVGKS) contacts ATP.

The protein belongs to the ClpA/ClpB family. Torsin subfamily.

The protein localises to the membrane. In Mus musculus (Mouse), this protein is Torsin-4A (Tor4a).